The chain runs to 276 residues: Undecaprenyl-diphosphatase 2 (276 aa).

The next 8 membrane-spanning stretches (helical) occupy residues 1 to 21 (MSLW…LFPV), 44 to 64 (QLLP…LWYF), 87 to 107 (GHLM…GLLL), 114 to 134 (VFHD…LLWL), 150 to 170 (LTFK…IPGF), 190 to 210 (AAEF…LLEL), 222 to 242 (DALL…RFLM), and 251 to 271 (LASF…WFMF).

This sequence belongs to the UppP family.

The protein resides in the cell inner membrane. It carries out the reaction di-trans,octa-cis-undecaprenyl diphosphate + H2O = di-trans,octa-cis-undecaprenyl phosphate + phosphate + H(+). Catalyzes the dephosphorylation of undecaprenyl diphosphate (UPP). Confers resistance to bacitracin. This chain is Undecaprenyl-diphosphatase 2, found in Burkholderia thailandensis (strain ATCC 700388 / DSM 13276 / CCUG 48851 / CIP 106301 / E264).